A 326-amino-acid chain; its full sequence is Endochitinase (326 aa).

The first 25 residues, 1–25, serve as a signal peptide directing secretion; that stretch reads MVYCTASLPLLLLLLVGLLAGEAFA. The Chitin-binding type-1 domain occupies 26–66; sequence EQCGRQAGGALCPGGLCCSQFGWCGSTSDYCGPTCQSQCGG. 7 cysteine pairs are disulfide-bonded: Cys-28–Cys-43, Cys-37–Cys-49, Cys-42–Cys-56, Cys-60–Cys-64, Cys-96–Cys-158, Cys-170–Cys-178, and Cys-277–Cys-309. Glu-140 functions as the Proton donor in the catalytic mechanism.

This sequence belongs to the glycosyl hydrolase 19 family. Chitinase class I subfamily. Expressed in the pulp of the fruit (at protein level). Expressed in mesocarp (at protein level).

The catalysed reaction is Random endo-hydrolysis of N-acetyl-beta-D-glucosaminide (1-&gt;4)-beta-linkages in chitin and chitodextrins.. Functionally, defense against chitin-containing fungal pathogens. Has in vitro antifungal activity against F.oxysporum inhibiting its growth and the branching of its hyphae. Has endochitinase activity, but no exochitinase or lysozyme activities. This chain is Endochitinase, found in Persea americana (Avocado).